We begin with the raw amino-acid sequence, 969 residues long: Translation initiation factor IF-2 (969 aa).

The interval 96–377 is disordered; sequence KRDPAEPVRA…NSRNQHQDRR (282 aa). Low complexity-rich tracts occupy residues 105 to 157, 167 to 181, and 216 to 252; these read AEPA…QAEP, AAPA…EPAK, and PSAP…PAAP. Residues 253 to 264 show a composition bias toward basic and acidic residues; it reads DRAREEARRAAE. The span at 357–366 shows a compositional bias: gly residues; sequence RAGGKGGRGG. The tr-type G domain occupies 470 to 637; that stretch reads PRAPVVTVMG…NVLLQAEILE (168 aa). The tract at residues 479–486 is G1; sequence GHVDHGKT. Residue 479 to 486 participates in GTP binding; the sequence is GHVDHGKT. Positions 504-508 are G2; that stretch reads GITQH. The tract at residues 525-528 is G3; the sequence is DTPG. GTP-binding positions include 525-529 and 579-582; these read DTPGH and NKID. The interval 579 to 582 is G4; that stretch reads NKID. The tract at residues 615 to 617 is G5; it reads SAK.

This sequence belongs to the TRAFAC class translation factor GTPase superfamily. Classic translation factor GTPase family. IF-2 subfamily.

It is found in the cytoplasm. Its function is as follows. One of the essential components for the initiation of protein synthesis. Protects formylmethionyl-tRNA from spontaneous hydrolysis and promotes its binding to the 30S ribosomal subunits. Also involved in the hydrolysis of GTP during the formation of the 70S ribosomal complex. The polypeptide is Translation initiation factor IF-2 (Bordetella parapertussis (strain 12822 / ATCC BAA-587 / NCTC 13253)).